We begin with the raw amino-acid sequence, 101 residues long: Phosphoribosyl-AMP cyclohydrolase (101 aa).

D71 is a Mg(2+) binding site. Zn(2+) is bound at residue C72. Positions 73 and 75 each coordinate Mg(2+). C88 and C95 together coordinate Zn(2+).

It belongs to the PRA-CH family. In terms of assembly, homodimer. Mg(2+) is required as a cofactor. Requires Zn(2+) as cofactor.

Its subcellular location is the cytoplasm. It carries out the reaction 1-(5-phospho-beta-D-ribosyl)-5'-AMP + H2O = 1-(5-phospho-beta-D-ribosyl)-5-[(5-phospho-beta-D-ribosylamino)methylideneamino]imidazole-4-carboxamide. Its pathway is amino-acid biosynthesis; L-histidine biosynthesis; L-histidine from 5-phospho-alpha-D-ribose 1-diphosphate: step 3/9. Catalyzes the hydrolysis of the adenine ring of phosphoribosyl-AMP. The polypeptide is Phosphoribosyl-AMP cyclohydrolase (Bacillus cereus (strain B4264)).